Consider the following 249-residue polypeptide: 3-deoxy-D-manno-octulosonic acid kinase (249 aa).

Asp-175 is a catalytic residue.

Belongs to the protein kinase superfamily. KdkA/RfaP family.

Its subcellular location is the cell inner membrane. It carries out the reaction an alpha-Kdo-(2-&gt;6)-lipid IVA + ATP = a 4-O-phospho-alpha-Kdo-(2-&gt;6)-lipid IVA + ADP + H(+). The protein operates within bacterial outer membrane biogenesis; LPS core biosynthesis. Functionally, catalyzes the ATP-dependent phosphorylation of the 3-deoxy-D-manno-octulosonic acid (Kdo) residue in Kdo-lipid IV(A) at the 4-OH position. This chain is 3-deoxy-D-manno-octulosonic acid kinase, found in Xanthomonas axonopodis pv. citri (strain 306).